Here is a 153-residue protein sequence, read N- to C-terminus: 4'-phosphopantetheinyl transferase B, mitochondrial (153 aa).

It belongs to the P-Pant transferase superfamily.

Its subcellular location is the mitochondrion. The catalysed reaction is apo-[ACP] + CoA = holo-[ACP] + adenosine 3',5'-bisphosphate + H(+). Acyl-carrier-protein synthase transfers the 4'-phosphopantetheine moiety from coenzyme A to a Ser of an acyl-carrier-protein. The 4'-phosphopantetheine (4'-PPT) portion of CoA provides the essential prosthetic group for a number of carrier proteins and multi-domain enzymes, priming them for the acceptance of acyl building blocks in fatty acid synthesis and many aspects of secondary metabolism mediated by polyketide synthases (PKSs) and non-ribosomal peptide synthetases (NRPSs). PptB is specific for the mitochondrial acyl carrier protein acpA. The polypeptide is 4'-phosphopantetheinyl transferase B, mitochondrial (Aspergillus fumigatus (strain ATCC MYA-4609 / CBS 101355 / FGSC A1100 / Af293) (Neosartorya fumigata)).